The sequence spans 357 residues: Protein RecA (357 aa).

71–78 (GPESSGKT) is an ATP binding site.

It belongs to the RecA family.

The protein resides in the cytoplasm. In terms of biological role, can catalyze the hydrolysis of ATP in the presence of single-stranded DNA, the ATP-dependent uptake of single-stranded DNA by duplex DNA, and the ATP-dependent hybridization of homologous single-stranded DNAs. It interacts with LexA causing its activation and leading to its autocatalytic cleavage. The chain is Protein RecA from Ehrlichia ruminantium (strain Gardel).